Reading from the N-terminus, the 374-residue chain is U-box domain-containing protein 8 (374 aa).

One can recognise a U-box domain in the interval 4–79 (DLPNDFRCPI…LNFAHVSLKE (76 aa)). ARM repeat units lie at residues 126–165 (SSIRRKVTESGAVRAALDCVDSCNQVLQEKSLSLLLNLSL), 167–206 (DDNKVGLVADGVIRRIVTVLRVGSPDCKAIAATLLTSLAV), 208–248 (EVNK…ALCS), 250–288 (PDNRKRVVDCGSVPILVEAADSGLERAVEVLGLLVKCRG), and 289–327 (GREEMSKVSGFVEVLVNVLRNGNLKGIQYSLFILNCLCC).

Expressed in the whole plant.

It catalyses the reaction S-ubiquitinyl-[E2 ubiquitin-conjugating enzyme]-L-cysteine + [acceptor protein]-L-lysine = [E2 ubiquitin-conjugating enzyme]-L-cysteine + N(6)-ubiquitinyl-[acceptor protein]-L-lysine.. Its pathway is protein modification; protein ubiquitination. In terms of biological role, functions as an E3 ubiquitin ligase. Involved in the age-dependent pseudo-self-compatibility process. The polypeptide is U-box domain-containing protein 8 (PUB8) (Arabidopsis thaliana (Mouse-ear cress)).